The following is a 968-amino-acid chain: Chaperone protein ClpB3, chloroplastic (968 aa).

A chloroplast-targeting transit peptide spans Met1–Arg67. The region spanning Thr78–Lys222 is the Clp R domain. 2 repeat regions span residues Phe82 to Gln147 and Leu159 to Lys222. Positions Leu237–Pro485 are i. Gly282 to Thr289 is an ATP binding site. A coiled-coil region spans residues Leu488 to Met606. The interval Val611–Ser802 is II. Gly685 to Thr692 provides a ligand contact to ATP.

This sequence belongs to the ClpA/ClpB family.

The protein localises to the plastid. It is found in the chloroplast. Its function is as follows. Molecular chaperone essential for chloroplast development and seedling viability. Mediates internal thylakoid membrane formation and confers thermotolerance to chloroplasts during heat stress. The polypeptide is Chaperone protein ClpB3, chloroplastic (CLPB3) (Arabidopsis thaliana (Mouse-ear cress)).